A 60-amino-acid polypeptide reads, in one-letter code: Large ribosomal subunit protein bL32 (60 aa).

The interval 1–60 is disordered; that stretch reads MAVQQNKKSPSKRGMHRSHNALTVPGIAVEPTTGETHLRHHISPNGFYRGRQVLKNKSEA. Basic residues predominate over residues 9 to 19; it reads SPSKRGMHRSH.

Belongs to the bacterial ribosomal protein bL32 family.

This is Large ribosomal subunit protein bL32 from Paracidovorax citrulli (strain AAC00-1) (Acidovorax citrulli).